Reading from the N-terminus, the 181-residue chain is Ankyrin repeat-containing protein YGL242C (181 aa).

Met1 bears the N-acetylmethionine mark. ANK repeat units follow at residues 49–78 (LGNTALHLCCKYGSWEVLDKILDQDGEIEI) and 85–120 (DGDTPLHVTVRYSQEEPEHGTFIARNLIEVGADPRV). The disordered stretch occupies residues 151-181 (IDSTNGSGDNNEDGEMIDDGPSDDDEEDDKK). The span at 160-181 (NNEDGEMIDDGPSDDDEEDDKK) shows a compositional bias: acidic residues. Phosphoserine is present on Ser172.

The protein is Ankyrin repeat-containing protein YGL242C of Saccharomyces cerevisiae (strain ATCC 204508 / S288c) (Baker's yeast).